A 321-amino-acid chain; its full sequence is Tetraketide alpha-pyrone reductase 2 (321 aa).

Ser2 is modified (N-acetylserine). NADP(+) is bound by residues 4–28 (YLVTGGTGFIASYIIKSLLELGHTV), Lys40, and Tyr160.

It belongs to the NAD(P)-dependent epimerase/dehydratase family. Dihydroflavonol-4-reductase subfamily.

It localises to the cytoplasm. Functionally, may be involved in the biosynthesis of hydroxylated tetraketide compounds that serve as sporopollenin precursors (the main constituents of exine). Acts on tetraketide alpha-pyrones and reduces the carbonyl function on the tetraketide alkyl chain to a secondary alcohol function. The polypeptide is Tetraketide alpha-pyrone reductase 2 (TKPR2) (Arabidopsis thaliana (Mouse-ear cress)).